The primary structure comprises 861 residues: Leucine--tRNA ligase (861 aa).

The short motif at 42–52 (PYPSGRLHMGH) is the 'HIGH' region element. A 'KMSKS' region motif is present at residues 619–623 (KMSKS). Lys-622 is a binding site for ATP.

This sequence belongs to the class-I aminoacyl-tRNA synthetase family.

It localises to the cytoplasm. It carries out the reaction tRNA(Leu) + L-leucine + ATP = L-leucyl-tRNA(Leu) + AMP + diphosphate. This Haemophilus influenzae (strain PittEE) protein is Leucine--tRNA ligase.